A 195-amino-acid chain; its full sequence is Imidazoleglycerol-phosphate dehydratase (195 aa).

The protein belongs to the imidazoleglycerol-phosphate dehydratase family.

The protein localises to the cytoplasm. The catalysed reaction is D-erythro-1-(imidazol-4-yl)glycerol 3-phosphate = 3-(imidazol-4-yl)-2-oxopropyl phosphate + H2O. The protein operates within amino-acid biosynthesis; L-histidine biosynthesis; L-histidine from 5-phospho-alpha-D-ribose 1-diphosphate: step 6/9. In Citrifermentans bemidjiense (strain ATCC BAA-1014 / DSM 16622 / JCM 12645 / Bem) (Geobacter bemidjiensis), this protein is Imidazoleglycerol-phosphate dehydratase.